We begin with the raw amino-acid sequence, 237 residues long: Probable glutathione-independent glyoxalase SNO4 (237 aa).

Residues Cys138, His139, and Glu170 contribute to the active site.

The protein belongs to the peptidase C56 family. HSP31-like subfamily. Homodimer.

Its subcellular location is the cytoplasm. The protein resides in the P-body. It carries out the reaction methylglyoxal + H2O = (R)-lactate + H(+). Its function is as follows. Catalyzes the conversion of methylglyoxal (MG) to D-lactate in a single glutathione (GSH)-independent step. May play a role in detoxifying endogenously produced glyoxals. Involved in protection against reactive oxygen species (ROS). Important for viability in stationary phase. May negatively regulate TORC1 in response to nutrient limitation. This chain is Probable glutathione-independent glyoxalase SNO4, found in Saccharomyces cerevisiae (strain ATCC 204508 / S288c) (Baker's yeast).